Here is an 85-residue protein sequence, read N- to C-terminus: Small ribosomal subunit protein uS17 (85 aa).

It belongs to the universal ribosomal protein uS17 family. Part of the 30S ribosomal subunit.

One of the primary rRNA binding proteins, it binds specifically to the 5'-end of 16S ribosomal RNA. This Mycoplasmoides gallisepticum (strain R(low / passage 15 / clone 2)) (Mycoplasma gallisepticum) protein is Small ribosomal subunit protein uS17.